Here is a 176-residue protein sequence, read N- to C-terminus: MLQLTTYRNLQVFLVIMTAIGMSFALFFLQRYMGFSPCPLCIFQRIGLMIMGGFALIAALFHPKSMVIRLLLWLGSLAGIGWAAIVAGRHVWLQHLPADQVPSCGPGLDYWLDTLPMQQVLKEVFAGSGECASIDWTFLGLSIPEQSLILFSILILTHLLILWRIVRPATPKPLAR.

Topologically, residues M1 to Q11 are cytoplasmic. A helical membrane pass occupies residues V12 to F28. The Periplasmic segment spans residues L29 to I46. C38 and C41 form a disulfide bridge. Residues G47–P63 traverse the membrane as a helical segment. Over K64–L70 the chain is Cytoplasmic. Residues L71 to G88 traverse the membrane as a helical segment. The Periplasmic portion of the chain corresponds to R89–E145. C104 and C131 form a disulfide bridge. A helical transmembrane segment spans residues Q146 to R164. The Cytoplasmic portion of the chain corresponds to I165–R176.

This sequence belongs to the DsbB family.

The protein localises to the cell inner membrane. Its function is as follows. Required for disulfide bond formation in some periplasmic proteins. Acts by oxidizing the DsbA protein. The sequence is that of Disulfide bond formation protein B from Psychrobacter cryohalolentis (strain ATCC BAA-1226 / DSM 17306 / VKM B-2378 / K5).